The chain runs to 508 residues: Glycerol kinase (508 aa).

T14 provides a ligand contact to ADP. Residues T14, T15, and S16 each contribute to the ATP site. T14 contributes to the sn-glycerol 3-phosphate binding site. R18 is an ADP binding site. 3 residues coordinate sn-glycerol 3-phosphate: R84, E85, and Y136. Glycerol contacts are provided by R84, E85, and Y136. A Phosphohistidine; by HPr modification is found at H232. D246 contacts sn-glycerol 3-phosphate. 2 residues coordinate glycerol: D246 and Q247. ADP is bound by residues T268 and G311. Residues T268, G311, Q315, and G412 each coordinate ATP. Residues G412 and N416 each contribute to the ADP site.

The protein belongs to the FGGY kinase family. In terms of assembly, homotetramer and homodimer (in equilibrium). Post-translationally, the phosphoenolpyruvate-dependent sugar phosphotransferase system (PTS), including enzyme I, and histidine-containing protein (HPr) are required for the phosphorylation, which leads to the activation of the enzyme.

It carries out the reaction glycerol + ATP = sn-glycerol 3-phosphate + ADP + H(+). Its pathway is polyol metabolism; glycerol degradation via glycerol kinase pathway; sn-glycerol 3-phosphate from glycerol: step 1/1. Activated by phosphorylation and inhibited by fructose 1,6-bisphosphate (FBP). Its function is as follows. Key enzyme in the regulation of glycerol uptake and metabolism. Catalyzes the phosphorylation of glycerol to yield sn-glycerol 3-phosphate. This Streptococcus pyogenes serotype M28 (strain MGAS6180) protein is Glycerol kinase.